Reading from the N-terminus, the 603-residue chain is Probable L-gulonolactone oxidase 6 (603 aa).

The N-terminal stretch at 1–35 (MAFTSSPSYGSLNAAFWRTIFVVHCISTLVFTTIS) is a signal peptide. The FAD-binding PCMH-type domain occupies 64 to 246 (STCRAANVAY…SQVTLKLQPM (183 aa)).

It belongs to the oxygen-dependent FAD-linked oxidoreductase family. Requires FAD as cofactor.

The enzyme catalyses L-gulono-1,4-lactone + O2 = L-ascorbate + H2O2 + H(+). It participates in cofactor biosynthesis; L-ascorbate biosynthesis. Its function is as follows. May be involved in the biosynthesis of ascorbic acid. The sequence is that of Probable L-gulonolactone oxidase 6 from Arabidopsis thaliana (Mouse-ear cress).